A 505-amino-acid polypeptide reads, in one-letter code: ATP synthase subunit alpha (505 aa).

An ATP-binding site is contributed by 170 to 177 (GDRQTGKS).

Belongs to the ATPase alpha/beta chains family. As to quaternary structure, F-type ATPases have 2 components, CF(1) - the catalytic core - and CF(0) - the membrane proton channel. CF(1) has five subunits: alpha(3), beta(3), gamma(1), delta(1), epsilon(1). CF(0) has four main subunits: a(1), b(1), b'(1) and c(9-12).

The protein localises to the cellular thylakoid membrane. The enzyme catalyses ATP + H2O + 4 H(+)(in) = ADP + phosphate + 5 H(+)(out). In terms of biological role, produces ATP from ADP in the presence of a proton gradient across the membrane. The alpha chain is a regulatory subunit. The polypeptide is ATP synthase subunit alpha (Prochlorococcus marinus (strain MIT 9312)).